Reading from the N-terminus, the 222-residue chain is Deoxyribose-phosphate aldolase (222 aa).

Residue Asp89 is the Proton donor/acceptor of the active site. Lys152 (schiff-base intermediate with acetaldehyde) is an active-site residue. The active-site Proton donor/acceptor is Lys181.

The protein belongs to the DeoC/FbaB aldolase family. DeoC type 1 subfamily.

It is found in the cytoplasm. It carries out the reaction 2-deoxy-D-ribose 5-phosphate = D-glyceraldehyde 3-phosphate + acetaldehyde. It functions in the pathway carbohydrate degradation; 2-deoxy-D-ribose 1-phosphate degradation; D-glyceraldehyde 3-phosphate and acetaldehyde from 2-deoxy-alpha-D-ribose 1-phosphate: step 2/2. Functionally, catalyzes a reversible aldol reaction between acetaldehyde and D-glyceraldehyde 3-phosphate to generate 2-deoxy-D-ribose 5-phosphate. The protein is Deoxyribose-phosphate aldolase of Alkaliphilus oremlandii (strain OhILAs) (Clostridium oremlandii (strain OhILAs)).